A 1794-amino-acid polypeptide reads, in one-letter code: Protein TIC 214 (1794 aa).

The next 6 membrane-spanning stretches (helical) occupy residues I19–G39, F68–L88, P91–H111, V133–L153, V176–I196, and I227–I247.

This sequence belongs to the TIC214 family. In terms of assembly, part of the Tic complex.

It is found in the plastid. The protein localises to the chloroplast inner membrane. Its function is as follows. Involved in protein precursor import into chloroplasts. May be part of an intermediate translocation complex acting as a protein-conducting channel at the inner envelope. The sequence is that of Protein TIC 214 from Olimarabidopsis pumila (Dwarf rocket).